We begin with the raw amino-acid sequence, 686 residues long: Solute carrier family 22 member 23 (686 aa).

2 disordered regions span residues 1 to 62 (MAID…GGGP) and 169 to 193 (GNRS…DKGD). Asn24 is a glycosylation site (N-linked (GlcNAc...) asparagine). Transmembrane regions (helical) follow at residues 234 to 254 (FSLL…ADWV) and 258 to 278 (PVLL…ALSV). Residue Asn279 is glycosylated (N-linked (GlcNAc...) asparagine). Transmembrane regions (helical) follow at residues 288-308 (FFEG…RIEL), 315-335 (FMIT…MPGL), 344-364 (VLQA…SIFP), 467-487 (ADYY…CVVV), 494-514 (GGLL…LGLL), 538-558 (IAFS…SVFF), 569-589 (CGGL…APII), and 598-618 (FLHH…ILLL).

The protein belongs to the major facilitator (TC 2.A.1) superfamily. Organic cation transporter (TC 2.A.1.19) family.

Its subcellular location is the membrane. This chain is Solute carrier family 22 member 23 (SLC22A23), found in Homo sapiens (Human).